The primary structure comprises 167 residues: MFSMVTEFMNYGQQTVRAARYIGQGFMITLSHANRLPVTIQYPYEKLITSERFRGRIHFEFDKCIACEVCVRVCPIDLPVVDWKLEMDIRKKRLLNYSIDFGICIFCGNCVEYCPTNCLSMTEEYELSTYDRHELNYNQIALGRLPMAVIDDYTTRTILNLPEIKNA.

2 consecutive 4Fe-4S ferredoxin-type domains span residues 55 to 84 (GRIHFEFDKCIACEVCVRVCPIDLPVVDWK) and 95 to 124 (LNYSIDFGICIFCGNCVEYCPTNCLSMTEE). 8 residues coordinate [4Fe-4S] cluster: Cys-64, Cys-67, Cys-70, Cys-74, Cys-104, Cys-107, Cys-110, and Cys-114.

Belongs to the complex I 23 kDa subunit family. As to quaternary structure, NDH is composed of at least 16 different subunits, 5 of which are encoded in the nucleus. [4Fe-4S] cluster serves as cofactor.

It localises to the plastid. The protein resides in the chloroplast thylakoid membrane. It catalyses the reaction a plastoquinone + NADH + (n+1) H(+)(in) = a plastoquinol + NAD(+) + n H(+)(out). The catalysed reaction is a plastoquinone + NADPH + (n+1) H(+)(in) = a plastoquinol + NADP(+) + n H(+)(out). In terms of biological role, NDH shuttles electrons from NAD(P)H:plastoquinone, via FMN and iron-sulfur (Fe-S) centers, to quinones in the photosynthetic chain and possibly in a chloroplast respiratory chain. The immediate electron acceptor for the enzyme in this species is believed to be plastoquinone. Couples the redox reaction to proton translocation, and thus conserves the redox energy in a proton gradient. The protein is NAD(P)H-quinone oxidoreductase subunit I, chloroplastic of Panax ginseng (Korean ginseng).